A 427-amino-acid chain; its full sequence is GTPase Obg (427 aa).

The 158-residue stretch at 1 to 158 folds into the Obg domain; the sequence is MFVDIAKIYV…LWVILELKVL (158 aa). Residues 159–330 enclose the OBG-type G domain; the sequence is ADVGLIGYPN…VLKRAYELLK (172 aa). GTP contacts are provided by residues 165–172, 190–194, 212–215, 282–285, and 311–313; these read GYPNVGKS, FTTKY, DIPG, NKMD, and SAA. Mg(2+) contacts are provided by S172 and T192. One can recognise an OCT domain in the interval 347–427; that stretch reads FVYYKKKDVK…ILDVEFEYYE (81 aa).

It belongs to the TRAFAC class OBG-HflX-like GTPase superfamily. OBG GTPase family. As to quaternary structure, monomer. Requires Mg(2+) as cofactor.

The protein resides in the cytoplasm. An essential GTPase which binds GTP, GDP and possibly (p)ppGpp with moderate affinity, with high nucleotide exchange rates and a fairly low GTP hydrolysis rate. Plays a role in control of the cell cycle, stress response, ribosome biogenesis and in those bacteria that undergo differentiation, in morphogenesis control. The sequence is that of GTPase Obg from Caldicellulosiruptor bescii (strain ATCC BAA-1888 / DSM 6725 / KCTC 15123 / Z-1320) (Anaerocellum thermophilum).